The chain runs to 621 residues: uncharacterized protein (621 aa).

Residues S269, S271, S274, S290, and S292 each carry the phosphoserine modification. LRR repeat units lie at residues 333 to 354, 357 to 379, 380 to 401, 404 to 425, 426 to 447, and 451 to 472; these read QLLY…VFLS, SLVS…GELP, QLCS…YHIS, HLQI…ENVP, SLEK…RRLV, and NFEE…YRIT. Residues 552–581 are disordered; that stretch reads SKNASGGDTSSNVSLLNGSASEEIPQNTES.

The protein localises to the cytoplasm. It localises to the nucleus. The protein resides in the vacuole membrane. This is an uncharacterized protein from Schizosaccharomyces pombe (strain 972 / ATCC 24843) (Fission yeast).